Consider the following 407-residue polypeptide: Multidrug resistance protein MdtH (407 aa).

A run of 10 helical transmembrane segments spans residues 13–33 (CFLIIDNMFVVIGFYVVFPLI), 88–108 (LGFIIMSVANTPLLLCLSCML), 139–159 (VLMLEDSMCAIIGIVLGTWLL), 163–183 (FKLVCFTGAILFFIAGVFNAW), 210–230 (FVIYVFTLTGYYILSAQVMLM), 247–267 (WMYIIEAILSLLLIMPITWWS), 277–297 (LMVGLITMIISLFPIGLVKNL), 298–318 (HTLLILISLFYIGSIIAEPAR), 340–360 (LSLALGGTVGYSGSGWLYDIG), and 368–388 (LPWIILSIIGLITLLGLYCQF).

The protein belongs to the major facilitator superfamily. DHA1 family. MdtH (TC 2.A.1.2.21) subfamily.

Its subcellular location is the cell inner membrane. The chain is Multidrug resistance protein MdtH from Blochmanniella pennsylvanica (strain BPEN).